Consider the following 134-residue polypeptide: Small ribosomal subunit protein uS9 (134 aa).

Residues Glu-97 to Arg-134 are disordered. Over residues Lys-115–Arg-134 the composition is skewed to basic residues.

Belongs to the universal ribosomal protein uS9 family.

The protein is Small ribosomal subunit protein uS9 (rpsI) of Chlamydia pneumoniae (Chlamydophila pneumoniae).